Here is a 181-residue protein sequence, read N- to C-terminus: GTPase RhebL1 (181 aa).

GTP contacts are provided by residues 30–36 (LEDYDPT), G61, 117–120 (NKAD), and 147–148 (SA). Residues 33 to 41 (YDPTVENTY) carry the Effector region motif. T36 provides a ligand contact to Mg(2+). Cysteine methyl ester is present on C178. A lipid anchor (S-farnesyl cysteine) is attached at C178. The propeptide at 179 to 181 (HLM) is removed in mature form.

It belongs to the small GTPase superfamily. Rheb family. Interacts with MTOR.

It is found in the endomembrane system. The protein resides in the cytoplasm. It carries out the reaction GTP + H2O = GDP + phosphate + H(+). In terms of biological role, binds GTP and exhibits intrinsic GTPase activity. May activate NF-kappa-B-mediated gene transcription. Promotes signal transduction through MTOR, activates RPS6KB1, and is a downstream target of the small GTPase-activating proteins TSC1 and TSC2. The chain is GTPase RhebL1 (RHEBL1) from Bos taurus (Bovine).